The chain runs to 407 residues: Obg-like ATPase homolog (407 aa).

In terms of domain architecture, OBG-type G spans 46-301; the sequence is LKIGIVGMPN…LTPEEAAQEC (256 aa). ATP contacts are provided by residues 55-60 and methionine 249; that span reads NIGKST. A TGS domain is found at 322-405; the sequence is NLIHYFTASE…EPGDIIFWKI (84 aa).

Belongs to the TRAFAC class OBG-HflX-like GTPase superfamily. OBG GTPase family.

Hydrolyzes ATP, and can also hydrolyze GTP with lower efficiency. Has lower affinity for GTP. The protein is Obg-like ATPase homolog of Schizosaccharomyces pombe (strain 972 / ATCC 24843) (Fission yeast).